We begin with the raw amino-acid sequence, 61 residues long: Photosystem II reaction center protein K (61 aa).

The propeptide occupies 1-24 (MLNIFNLVCICIHSVLYSSSFFSA). A helical transmembrane segment spans residues 36-56 (IVDIMPVIPLLFFLLAFVWQA).

It belongs to the PsbK family. As to quaternary structure, PSII is composed of 1 copy each of membrane proteins PsbA, PsbB, PsbC, PsbD, PsbE, PsbF, PsbH, PsbI, PsbJ, PsbK, PsbL, PsbM, PsbT, PsbX, PsbY, PsbZ, Psb30/Ycf12, at least 3 peripheral proteins of the oxygen-evolving complex and a large number of cofactors. It forms dimeric complexes.

The protein localises to the plastid. The protein resides in the chloroplast thylakoid membrane. One of the components of the core complex of photosystem II (PSII). PSII is a light-driven water:plastoquinone oxidoreductase that uses light energy to abstract electrons from H(2)O, generating O(2) and a proton gradient subsequently used for ATP formation. It consists of a core antenna complex that captures photons, and an electron transfer chain that converts photonic excitation into a charge separation. In Glycine max (Soybean), this protein is Photosystem II reaction center protein K.